The primary structure comprises 60 residues: Large ribosomal subunit protein uL30 (60 aa).

This sequence belongs to the universal ribosomal protein uL30 family. Part of the 50S ribosomal subunit.

The protein is Large ribosomal subunit protein uL30 of Azoarcus sp. (strain BH72).